The following is a 70-amino-acid chain: DNA-directed RNA polymerase subunit omega (70 aa).

It belongs to the RNA polymerase subunit omega family. In terms of assembly, the RNAP catalytic core consists of 2 alpha, 1 beta, 1 beta' and 1 omega subunit. When a sigma factor is associated with the core the holoenzyme is formed, which can initiate transcription.

It catalyses the reaction RNA(n) + a ribonucleoside 5'-triphosphate = RNA(n+1) + diphosphate. Functionally, promotes RNA polymerase assembly. Latches the N- and C-terminal regions of the beta' subunit thereby facilitating its interaction with the beta and alpha subunits. The polypeptide is DNA-directed RNA polymerase subunit omega (Shouchella clausii (strain KSM-K16) (Alkalihalobacillus clausii)).